Reading from the N-terminus, the 55-residue chain is Large ribosomal subunit protein bL33 (55 aa).

This sequence belongs to the bacterial ribosomal protein bL33 family.

The chain is Large ribosomal subunit protein bL33 from Edwardsiella ictaluri (strain 93-146).